The primary structure comprises 744 residues: Protein zyg-11 homolog B (744 aa).

3 LRR repeats span residues 185-208, 216-236, and 237-261; these read LPRL…LACK, MHHL…VREL, and KHLN…LLEQ.

Belongs to the zyg-11 family. As to quaternary structure, (Microbial infection) Interacts with SARS-COV-2 protein ORF10. Interacts with ELOC/Elongin C. Part of an E3 ubiquitin ligase complex including ZYG11B, CUL2 and Elongin BC. (Microbial infection) Ubiquitinated; leading to proteasomal degradation in the presence of herpes simplex virus 1/HHV-1.

The protein localises to the cytoplasm. Serves as substrate adapter subunit in the E3 ubiquitin ligase complex ZYG11B-CUL2-Elongin BC. Acts to target substrates bearing N-terminal degrons for proteasomal degradation with the first four residues of substrates being the key recognition elements. Prefers Nt-Gly but also has the capacity to recognize Nt-Ser, -Ala and -Cys. Involved in the clearance of proteolytic fragments generated by caspase cleavage during apoptosis since N-terminal glycine degrons are strongly enriched at caspase cleavage sites. Also important in the quality control of protein N-myristoylation in which N-terminal glycine degrons are conditionally exposed after a failure of N-myristoylation. In addition, plays a role in the amplification of cGAS to enhance innate immune response. Mechanistically, strengthens the processes of cGAS binding with dsDNA and assembling oligomers and also accelerates and stabilizes cGAS-DNA condensation, thereby enhancing production of antiviral IFNs and inflammatory cytokines. The sequence is that of Protein zyg-11 homolog B from Homo sapiens (Human).